The following is a 109-amino-acid chain: Oncomodulin (109 aa).

At Ser2 the chain carries N-acetylserine. 2 EF-hand domains span residues 39 to 74 and 78 to 109; these read MSASQLKDIFQFIDNDQSGYLDEDELKYFLQRFQSD and LTESETKSLMDAADNDGDGKIGADEFQEMVHS. Ca(2+) is bound by residues Asp52, Asp54, Ser56, Tyr58, Glu63, Asp91, Asp93, Asp95, Lys97, and Glu102. The tract at residues 82 to 109 is disordered; it reads ETKSLMDAADNDGDGKIGADEFQEMVHS. The segment covering 94 to 109 has biased composition (basic and acidic residues); sequence GDGKIGADEFQEMVHS.

This sequence belongs to the parvalbumin family. As to expression, found in tumor tissues and not detected in normal tissues.

In terms of biological role, has some calmodulin-like activity with respect to enzyme activation and growth regulation. Binds two calcium ions. This chain is Oncomodulin (Ocm), found in Mus musculus (Mouse).